We begin with the raw amino-acid sequence, 425 residues long: tRNA(Ile)-lysidine synthase (425 aa).

27–32 (SGGLDS) provides a ligand contact to ATP.

The protein belongs to the tRNA(Ile)-lysidine synthase family.

The protein resides in the cytoplasm. It carries out the reaction cytidine(34) in tRNA(Ile2) + L-lysine + ATP = lysidine(34) in tRNA(Ile2) + AMP + diphosphate + H(+). Functionally, ligates lysine onto the cytidine present at position 34 of the AUA codon-specific tRNA(Ile) that contains the anticodon CAU, in an ATP-dependent manner. Cytidine is converted to lysidine, thus changing the amino acid specificity of the tRNA from methionine to isoleucine. The polypeptide is tRNA(Ile)-lysidine synthase (Streptococcus pneumoniae (strain JJA)).